Reading from the N-terminus, the 218-residue chain is uncharacterized protein (218 aa).

Transmembrane regions (helical) follow at residues 9-29 (LLVIVGIDLILGGDNAVVIAM), 42-62 (AIILGTFIAVAMRIGLTSAAV), 67-87 (IPFLQCAGGIFLLYLGYQLLI), 107-127 (TIVLADLFMSLDNVIAVAGAS), 134-154 (VVIGLCVSVPVIIWGSKLIHI), 159-179 (IPLLIYAGSGLLAYTGGEMIV), and 192-212 (GTVETLLPILTVAFVILASIY).

This sequence belongs to the TerC family.

The protein resides in the cell membrane. This is an uncharacterized protein from Bacillus subtilis (strain 168).